We begin with the raw amino-acid sequence, 347 residues long: Heat-inducible transcription repressor HrcA (347 aa).

This sequence belongs to the HrcA family.

In terms of biological role, negative regulator of class I heat shock genes (grpE-dnaK-dnaJ and groELS operons). Prevents heat-shock induction of these operons. The polypeptide is Heat-inducible transcription repressor HrcA (Mycobacterium sp. (strain JLS)).